A 496-amino-acid polypeptide reads, in one-letter code: Aspartyl/glutamyl-tRNA(Asn/Gln) amidotransferase subunit B (496 aa).

It belongs to the GatB/GatE family. GatB subfamily. In terms of assembly, heterotrimer of A, B and C subunits.

It catalyses the reaction L-glutamyl-tRNA(Gln) + L-glutamine + ATP + H2O = L-glutaminyl-tRNA(Gln) + L-glutamate + ADP + phosphate + H(+). It carries out the reaction L-aspartyl-tRNA(Asn) + L-glutamine + ATP + H2O = L-asparaginyl-tRNA(Asn) + L-glutamate + ADP + phosphate + 2 H(+). Allows the formation of correctly charged Asn-tRNA(Asn) or Gln-tRNA(Gln) through the transamidation of misacylated Asp-tRNA(Asn) or Glu-tRNA(Gln) in organisms which lack either or both of asparaginyl-tRNA or glutaminyl-tRNA synthetases. The reaction takes place in the presence of glutamine and ATP through an activated phospho-Asp-tRNA(Asn) or phospho-Glu-tRNA(Gln). The sequence is that of Aspartyl/glutamyl-tRNA(Asn/Gln) amidotransferase subunit B from Xanthobacter autotrophicus (strain ATCC BAA-1158 / Py2).